A 769-amino-acid chain; its full sequence is Serine protease HtrA-like (769 aa).

The segment covering 1–20 (MDIGKKHVIPKSQYRRKRRE) has biased composition (basic residues). 2 disordered regions span residues 1 to 287 (MDIG…DKDN) and 324 to 390 (EDKH…KGRA). Composition is skewed to basic and acidic residues over residues 21 to 64 (FFHN…ERFK) and 71 to 108 (LEQR…DVSK). The segment covering 126–137 (YEQNSEATLSTK) has biased composition (polar residues). The segment covering 138–186 (STDKVESTEMRKLSSDKNKVGHEEQHVLSKPSEHDKETRIDSESSRTDS) has biased composition (basic and acidic residues). The segment covering 247–262 (QQSQNEQTKTYTYGDS) has biased composition (polar residues). Over residues 264–287 (QNDKSNHENDLSHHTPSISDDKDN) the composition is skewed to basic and acidic residues. Residues 331–347 (ADSSETVGYQSQSTASH) are compositionally biased toward polar residues. The span at 348-364 (RSTEKRNISINDHDKLN) shows a compositional bias: basic and acidic residues. Polar residues predominate over residues 365-390 (GQKTNTKTSANNNQKKATSKLNKGRA). The helical transmembrane segment at 410–430 (LVILMGIIILIVILNAIFNNV) threads the bilayer. Residues H504, D534, and S619 each act as charge relay system in the active site. Residues 680–733 (IASLNSFERQAVKLPGKVKNGVVVDQVDNNGLADQSGLKKGDVITELDGKLLED) form the PDZ domain.

This sequence belongs to the peptidase S1C family.

It is found in the cell membrane. This chain is Serine protease HtrA-like, found in Staphylococcus aureus (strain N315).